Here is a 228-residue protein sequence, read N- to C-terminus: CD302 antigen (228 aa).

Positions 1–20 (MPHAALSSLVLLSLATAIFA) are cleaved as a signal peptide. The Extracellular portion of the chain corresponds to 21 to 165 (DCPSSIWVQF…YDKKYLSDNH (145 aa)). The C-type lectin domain occupies 30–149 (FQGSCYTFLQ…CEMSSVTGTL (120 aa)). N-linked (GlcNAc...) asparagine glycosylation occurs at asparagine 107. Cysteine 125 and cysteine 140 are oxidised to a cystine. The helical transmembrane segment at 166–186 (ILISTLVIASTVTLAVLGAVI) threads the bilayer. Residues 187–228 (WFLYRRSARSGFTSFSPAPQSPYSDGCALVVSEEDEYSVQLD) are Cytoplasmic-facing.

Its subcellular location is the membrane. It localises to the cell projection. It is found in the filopodium. The protein localises to the cytoplasm. The protein resides in the cell cortex. Its subcellular location is the microvillus. Its function is as follows. Potential multifunctional C-type lectin receptor that may play roles in endocytosis and phagocytosis as well as in cell adhesion and migration. The chain is CD302 antigen (Cd302) from Rattus norvegicus (Rat).